The chain runs to 215 residues: Probable phosphoglycerate mutase GpmB (215 aa).

Substrate is bound by residues 8–15 (RHGETQWN), 21–22 (QG), Arg-58, Arg-60, 82–85 (ELNM), 104–105 (RR), and 151–152 (GI). The active-site Tele-phosphohistidine intermediate is the His-9. Glu-82 serves as the catalytic Proton donor/acceptor.

It belongs to the phosphoglycerate mutase family. GpmB subfamily.

It catalyses the reaction (2R)-2-phosphoglycerate = (2R)-3-phosphoglycerate. Its pathway is carbohydrate degradation; glycolysis; pyruvate from D-glyceraldehyde 3-phosphate: step 3/5. The polypeptide is Probable phosphoglycerate mutase GpmB (Shigella boydii serotype 18 (strain CDC 3083-94 / BS512)).